The sequence spans 263 residues: Putative ankyrin repeat domain-containing protein 20A12 pseudogene (263 aa).

2 coiled-coil regions span residues 65–121 and 171–263; these read KKDL…MLES and NQVF…IQLH.

This is Putative ankyrin repeat domain-containing protein 20A12 pseudogene from Homo sapiens (Human).